Here is a 374-residue protein sequence, read N- to C-terminus: UPF0754 membrane protein SAB1779c (374 aa).

The next 2 helical transmembrane spans lie at 4-24 and 354-374; these read LFII…TNVI and SLGF…AIFV.

The protein belongs to the UPF0754 family.

The protein localises to the cell membrane. The polypeptide is UPF0754 membrane protein SAB1779c (Staphylococcus aureus (strain bovine RF122 / ET3-1)).